A 147-amino-acid polypeptide reads, in one-letter code: Hemoglobin subunit beta (147 aa).

The residue at position 2 (V2) is an N-acetylvaline. Positions 3–147 (HLTPEEKSAV…VANALAHKYH (145 aa)) constitute a Globin domain. T13 bears the Phosphothreonine mark. Phosphoserine is present on S45. K60 carries the post-translational modification N6-acetyllysine. Residue H64 coordinates heme b. Position 83 is an N6-acetyllysine (K83). H93 contributes to the heme b binding site. At C94 the chain carries S-nitrosocysteine. At K145 the chain carries N6-acetyllysine.

The protein belongs to the globin family. As to quaternary structure, heterotetramer of two alpha chains and two beta chains in adult hemoglobin A (HbA). As to expression, red blood cells.

Its function is as follows. Involved in oxygen transport from the lung to the various peripheral tissues. This Pan paniscus (Pygmy chimpanzee) protein is Hemoglobin subunit beta (HBB).